The primary structure comprises 349 residues: Twinfilin-2 (349 aa).

2 ADF-H domains span residues 4-139 (QTGI…KHVS) and 177-313 (GLAF…DEVH). Residues 324–349 (AKPKGPVGKRGQKRLIKGPGENGEDS) form a disordered region.

Belongs to the actin-binding proteins ADF family. Twinfilin subfamily. In terms of assembly, interacts with G-actin; ADP-actin form and capping protein (CP).

Its subcellular location is the cytoplasm. The protein localises to the cytoskeleton. It localises to the perinuclear region. In terms of biological role, actin-binding protein involved in motile and morphological processes. Inhibits actin polymerization, likely by sequestering G-actin. The protein is Twinfilin-2 (TWF2) of Gallus gallus (Chicken).